A 285-amino-acid chain; its full sequence is Elongation factor Ts (285 aa).

The involved in Mg(2+) ion dislocation from EF-Tu stretch occupies residues 84 to 87 (TDFV).

Belongs to the EF-Ts family.

It is found in the cytoplasm. Functionally, associates with the EF-Tu.GDP complex and induces the exchange of GDP to GTP. It remains bound to the aminoacyl-tRNA.EF-Tu.GTP complex up to the GTP hydrolysis stage on the ribosome. The chain is Elongation factor Ts from Bifidobacterium animalis subsp. lactis (strain AD011).